Reading from the N-terminus, the 238-residue chain is IkB-like protein (238 aa).

ANK repeat units lie at residues 48–77 (GSSV…PGEI), 86–115 (DGNS…KNGT), 123–152 (NGMT…DPTQ), and 157–187 (RGFT…PLYM). Residues 80 to 86 (PHRRDKD) carry the Nuclear localization signal motif. A Nuclear localization signal motif is present at residues 202 to 213 (KKKPKIIITGCK). The PxIxITxC motif; Interaction with host PPP3CA signature appears at 205 to 212 (PKIIITGC). Positions 227–230 (FLCV) match the FLCV motif motif.

The protein belongs to the asfivirus A238L family. In terms of assembly, interacts with host PPIA. Interacts with host PPP3CA/Calcineurin. Interacts with host RELA/p65; interaction of the 32 kDa form with host RELA results in the formation of a stable complex with NF-kappa-B. Interacts with host PPP3R1. Interacts with host EP300; this interaction inhibits the association of host EP300 with host RELA, JUN and NFATC2. Post-translationally, the protein exists in a 28 kDa and a 32 kDa form, probably due to post-translational modifications which are neither phosphorylation, nor sumoylation.

Its subcellular location is the host nucleus. The protein localises to the host cytoplasm. In terms of biological role, I-kappa-B- (IkB)-like protein that inhibits the binding of NF-kappa-B to DNA, thereby down-regulating pro-inflammatory cytokine production. Forms a heterodimer with the NF-kappa-B subunit RELA/p65 and prevents the activation of the NF-kappa-B transcription factor. Also inhibits the host calcineurin phosphatase activity, which is required for the induction of nuclear factor of activated T cells(NFAT)-dependent immune response genes. Inhibits calcineurin function, which is required for the induction of nuclear factor of activated T cells (NFAT)-dependent immune response genes. Prevents the binding of substrates to calcineurin without affecting the phosphatase activity. Does not contain the serine residues that are phosphorylated by host IkB kinase and thus is not degraded following stimulation of the NFkB pathway. In African swine fever virus (strain Badajoz 1971 Vero-adapted) (Ba71V), this protein is IkB-like protein (A238L).